Here is a 616-residue protein sequence, read N- to C-terminus: Pheromone-processing carboxypeptidase KEX1 (616 aa).

The N-terminal stretch at 1-28 (MAPRFSWSFATSWHALAILALWPVSTLA) is a signal peptide. Over 29–516 (GDKSAADYYV…NEAKWHAYQR (488 aa)) the chain is Lumenal. The N-linked (GlcNAc...) asparagine glycan is linked to Asn119. The active site involves Ser183. An N-linked (GlcNAc...) asparagine glycan is attached at Asn357. The active site involves Asp382. N-linked (GlcNAc...) asparagine glycosylation is found at Asn433 and Asn441. The active site involves His444. The segment at 468–504 (SIGGQPSDSRIDGEKGPDTSVGGAKNNTQQHEEETKQ) is disordered. Asn493 carries N-linked (GlcNAc...) asparagine glycosylation. Residues 517–537 (SGEVVLVIVIIAASVWGYFVW) form a helical membrane-spanning segment. Residues 538 to 616 (RQRRKGAAYS…DEEEEGTTKT (79 aa)) lie on the Cytoplasmic side of the membrane. The segment at 577-616 (AAFDETTVDNIPLQESIGRGESKYSIGDDSDEEEEGTTKT) is disordered. The segment covering 604-616 (DDSDEEEEGTTKT) has biased composition (acidic residues).

The protein belongs to the peptidase S10 family.

Its subcellular location is the golgi apparatus. The protein localises to the trans-Golgi network membrane. The enzyme catalyses Preferential release of a C-terminal arginine or lysine residue.. Protease with a carboxypeptidase B-like function involved in the C-terminal processing of the lysine and arginine residues from protein precursors. Promotes cell fusion and is involved in the programmed cell death. The chain is Pheromone-processing carboxypeptidase KEX1 (KEX1) from Metarhizium acridum (strain CQMa 102).